A 443-amino-acid polypeptide reads, in one-letter code: Glucose-6-phosphate isomerase (443 aa).

The Proton donor role is filled by E285. Catalysis depends on residues H306 and K420.

It belongs to the GPI family.

Its subcellular location is the cytoplasm. It catalyses the reaction alpha-D-glucose 6-phosphate = beta-D-fructose 6-phosphate. It functions in the pathway carbohydrate biosynthesis; gluconeogenesis. The protein operates within carbohydrate degradation; glycolysis; D-glyceraldehyde 3-phosphate and glycerone phosphate from D-glucose: step 2/4. In terms of biological role, catalyzes the reversible isomerization of glucose-6-phosphate to fructose-6-phosphate. This Staphylococcus aureus (strain Mu3 / ATCC 700698) protein is Glucose-6-phosphate isomerase.